The sequence spans 273 residues: HTH-type transcriptional activator RhaS (273 aa).

One can recognise an HTH araC/xylS-type domain in the interval 174 to 272 (YQLLDWLQNN…SQSPRDLRSQ (99 aa)). 2 DNA-binding regions (H-T-H motif) span residues 191–212 (PELA…KNKT) and 239–262 (VTDI…KREF).

In terms of assembly, binds DNA as a dimer.

Its subcellular location is the cytoplasm. Functionally, activates expression of the rhaBAD and rhaT operons. This Yersinia pseudotuberculosis serotype I (strain IP32953) protein is HTH-type transcriptional activator RhaS.